The sequence spans 365 residues: Mannitol dehydrogenase (365 aa).

Zn(2+) is bound by residues C50, H72, C103, C106, C109, C117, and C166.

It belongs to the zinc-containing alcohol dehydrogenase family. Zn(2+) serves as cofactor.

It is found in the cytoplasm. The catalysed reaction is D-mannitol + NAD(+) = D-mannose + NADH + H(+). Functionally, oxidizes mannitol to mannose. Provides the initial step by which translocated mannitol is committed to central metabolism and, by regulating mannitol pool size, is important in regulating salt tolerance at the cellular level. The sequence is that of Mannitol dehydrogenase (MTD) from Apium graveolens (Celery).